Here is a 71-residue protein sequence, read N- to C-terminus: Small ribosomal subunit protein bS21 (71 aa).

It belongs to the bacterial ribosomal protein bS21 family.

This Buchnera aphidicola subsp. Acyrthosiphon pisum (strain 5A) protein is Small ribosomal subunit protein bS21.